The primary structure comprises 124 residues: Small ribosomal subunit protein eS25 (124 aa).

The segment covering 1–22 (MPPKDSKQKKDAGKSKKDKDPV) has biased composition (basic and acidic residues). The segment at 1 to 37 (MPPKDSKQKKDAGKSKKDKDPVNKSGGKAKKKKWSKG) is disordered. Basic residues predominate over residues 27 to 37 (GKAKKKKWSKG).

This sequence belongs to the eukaryotic ribosomal protein eS25 family. In terms of assembly, component of the small ribosomal subunit.

It is found in the cytoplasm. Component of the small ribosomal subunit. The ribosome is a large ribonucleoprotein complex responsible for the synthesis of proteins in the cell. The protein is Small ribosomal subunit protein eS25 (rps25) of Danio rerio (Zebrafish).